A 101-amino-acid polypeptide reads, in one-letter code: Small ribosomal subunit protein uS14 (101 aa).

Belongs to the universal ribosomal protein uS14 family. Part of the 30S ribosomal subunit. Contacts proteins S3 and S10.

Functionally, binds 16S rRNA, required for the assembly of 30S particles and may also be responsible for determining the conformation of the 16S rRNA at the A site. This chain is Small ribosomal subunit protein uS14, found in Polaromonas sp. (strain JS666 / ATCC BAA-500).